An 808-amino-acid chain; its full sequence is Sucrose synthase 1 (808 aa).

The tract at residues 277–754 is GT-B glycosyltransferase; the sequence is MVFNVVILSP…GLQRIEEKYT (478 aa).

It belongs to the glycosyltransferase 1 family. Plant sucrose synthase subfamily. In terms of assembly, homotetramer. Expressed in the phloem of leaves and in roots. Detected in the whole plant but more precisely confined to the vasculature in cotyledons, mature leaves and siliques.

The enzyme catalyses an NDP-alpha-D-glucose + D-fructose = a ribonucleoside 5'-diphosphate + sucrose + H(+). Its function is as follows. Sucrose-cleaving enzyme that provides UDP-glucose and fructose for various metabolic pathways. The chain is Sucrose synthase 1 (SUS1) from Arabidopsis thaliana (Mouse-ear cress).